Here is a 440-residue protein sequence, read N- to C-terminus: Probable D-serine dehydratase (440 aa).

Lys111 is modified (N6-(pyridoxal phosphate)lysine).

The protein belongs to the serine/threonine dehydratase family. DsdA subfamily. Requires pyridoxal 5'-phosphate as cofactor.

It carries out the reaction D-serine = pyruvate + NH4(+). This Rhizobium leguminosarum bv. trifolii (strain WSM2304) protein is Probable D-serine dehydratase.